A 397-amino-acid chain; its full sequence is Tryptophan synthase beta chain (397 aa).

At Lys88 the chain carries N6-(pyridoxal phosphate)lysine.

Belongs to the TrpB family. As to quaternary structure, tetramer of two alpha and two beta chains. Pyridoxal 5'-phosphate is required as a cofactor.

It carries out the reaction (1S,2R)-1-C-(indol-3-yl)glycerol 3-phosphate + L-serine = D-glyceraldehyde 3-phosphate + L-tryptophan + H2O. The protein operates within amino-acid biosynthesis; L-tryptophan biosynthesis; L-tryptophan from chorismate: step 5/5. Functionally, the beta subunit is responsible for the synthesis of L-tryptophan from indole and L-serine. This is Tryptophan synthase beta chain from Haemophilus influenzae (strain 86-028NP).